Consider the following 295-residue polypeptide: Oxidoreductase AN1597 (295 aa).

It belongs to the asaB hydroxylase/desaturase family.

Its pathway is secondary metabolite biosynthesis; terpenoid biosynthesis. In terms of biological role, oxidoreductase; part of the gene cluster that mediates the biosynthesis of the diterpene ent-pimara-8(14),15-diene (PD). Within the cluster, the HMG-CoA reductase AN1593 functions in the mevalonate pathway, which produces isoprenoid precursors. The geranylgeranyl pyrophosphate (GGPP) synthase AN1592 is needed in the formation of GGPP, the precursor for diterpenes. Lastly, the pimaradiene synthase pbcA performs the 2 cyclization steps that convert GGPP to ent-pimara-8(14),15-diene. The putative roles of the remaining cluster enzymes in ent-pimara-8(14),15-diene biosynthesis is unclear. The cytochrome P450 monooxygenase AN1598, the glutathione S-transferase AN1595, the oxidoreductases AN1596 and AN1597 probably function as decorative enzymes. It is possible that in biological conditions the compound is oxidized to ent-pimara-8(14),15-dien-19-oic acid, which is a bioactive diterpene compound predominant in many plant extracts. The chain is Oxidoreductase AN1597 from Emericella nidulans (strain FGSC A4 / ATCC 38163 / CBS 112.46 / NRRL 194 / M139) (Aspergillus nidulans).